The sequence spans 377 residues: MSVTELKERHMAATQTVNDLREKLKQKRLQLLDTDVSGYARSQGKTPVTFGPTDLVCCRILQGHTGKVYSLDWTPEKNRIVSASQDGRLIVWNALTSQKTHAIKLPCAWVMTCAFSPSGQSVACGGLDSVCSIFNLNSPIDKDGNHPVSRMLSGHKGYVSSCQYVPDEDTHLITSSGDQTCVLWDITTGLRTSVFGGEFQSGHTADVQSVSISSSNPRLFVSGSCDTTARLWDTRVASRAQRTFYGHEGDVNTVKFFPDGNRFGTGSEDGTCRLFDIRTEHQLQVYYQPHGDGDIPHVTSMAFSISGRLLFVGYSNGDCYVWDTLLAKVVLNLGGVQNSHEGRISCLGLSADGSALCTGSWDTNLKIWAFGGHRSVI.

WD repeat units follow at residues 63–93, 105–135, 154–185, 202–233, 246–276, 293–323, and 339–369; these read GHTG…IVWN, LPCA…SIFN, GHKG…VLWD, GHTA…RLWD, GHEG…RLFD, GDIP…YVWD, and SHEG…KIWA.

This sequence belongs to the WD repeat G protein beta family. As to quaternary structure, g proteins are composed of 3 units, alpha, beta and gamma.

Functionally, guanine nucleotide-binding proteins (G proteins) are involved as a modulator or transducer in various transmembrane signaling systems. The beta and gamma chains are required for the GTPase activity, for replacement of GDP by GTP, and for G protein-effector interaction. The sequence is that of Guanine nucleotide-binding protein subunit beta-1 from Nicotiana tabacum (Common tobacco).